Here is a 351-residue protein sequence, read N- to C-terminus: Deoxyguanosinetriphosphate triphosphohydrolase-like protein (351 aa).

An HD domain is found at 75-196; it reads RLTHTLEVAE…VRVADIIAYL (122 aa).

It belongs to the dGTPase family. Type 2 subfamily.

In Desulfatibacillum aliphaticivorans, this protein is Deoxyguanosinetriphosphate triphosphohydrolase-like protein.